Reading from the N-terminus, the 498-residue chain is Lysine--tRNA ligase (498 aa).

Glu-409 and Glu-416 together coordinate Mg(2+).

Belongs to the class-II aminoacyl-tRNA synthetase family. Homodimer. The cofactor is Mg(2+).

It is found in the cytoplasm. It catalyses the reaction tRNA(Lys) + L-lysine + ATP = L-lysyl-tRNA(Lys) + AMP + diphosphate. This is Lysine--tRNA ligase from Teredinibacter turnerae (strain ATCC 39867 / T7901).